Reading from the N-terminus, the 467-residue chain is Uronate isomerase (467 aa).

Belongs to the metallo-dependent hydrolases superfamily. Uronate isomerase family.

It carries out the reaction D-glucuronate = D-fructuronate. It catalyses the reaction aldehydo-D-galacturonate = keto-D-tagaturonate. It participates in carbohydrate metabolism; pentose and glucuronate interconversion. This is Uronate isomerase from Haemophilus influenzae (strain 86-028NP).